A 749-amino-acid chain; its full sequence is Catalase-peroxidase 2 (749 aa).

An N-terminal signal peptide occupies residues 1–27; the sequence is MFKRTIPLFAAFTLAISPSIFPNYAHA. Residues 107-229 constitute a cross-link (tryptophyl-tyrosyl-methioninium (Trp-Tyr) (with M-255)); it reads WHAAGTYRIY…LAATVMGLIY (123 aa). His-108 functions as the Proton acceptor in the catalytic mechanism. A cross-link (tryptophyl-tyrosyl-methioninium (Tyr-Met) (with W-107)) is located at residues 229 to 255; the sequence is YVNPEGPNGVPDPLAAAEKIRETFGRM. Residue His-270 coordinates heme b.

The protein belongs to the peroxidase family. Peroxidase/catalase subfamily. Homodimer or homotetramer. Heme b serves as cofactor. Post-translationally, formation of the three residue Trp-Tyr-Met cross-link is important for the catalase, but not the peroxidase activity of the enzyme.

It carries out the reaction H2O2 + AH2 = A + 2 H2O. The enzyme catalyses 2 H2O2 = O2 + 2 H2O. Its function is as follows. Bifunctional enzyme with both catalase and broad-spectrum peroxidase activity. This chain is Catalase-peroxidase 2, found in Legionella pneumophila (strain Lens).